The following is a 431-amino-acid chain: Histidinol dehydrogenase (431 aa).

Tyr127, Gln189, and Asn212 together coordinate NAD(+). Positions 237, 259, and 262 each coordinate substrate. Positions 259 and 262 each coordinate Zn(2+). Residues Glu326 and His327 each act as proton acceptor in the active site. 4 residues coordinate substrate: His327, Asp360, Glu414, and His419. Position 360 (Asp360) interacts with Zn(2+). Position 419 (His419) interacts with Zn(2+).

This sequence belongs to the histidinol dehydrogenase family. Zn(2+) is required as a cofactor.

The catalysed reaction is L-histidinol + 2 NAD(+) + H2O = L-histidine + 2 NADH + 3 H(+). The protein operates within amino-acid biosynthesis; L-histidine biosynthesis; L-histidine from 5-phospho-alpha-D-ribose 1-diphosphate: step 9/9. Catalyzes the sequential NAD-dependent oxidations of L-histidinol to L-histidinaldehyde and then to L-histidine. The chain is Histidinol dehydrogenase from Xanthomonas oryzae pv. oryzae (strain KACC10331 / KXO85).